The primary structure comprises 1790 residues: E3 ubiquitin-protein ligase RBBP6 (1790 aa).

Residues 4-76 enclose the DWNN domain; that stretch reads VHYKFSSKLN…NSSVIVRRIP (73 aa). At Lys130 the chain carries N6-acetyllysine. The CCHC-type zinc-finger motif lies at 160-177; that stretch reads YTCFRCGKPGHYIKNCPT. A phosphoserine mark is found at Ser245, Ser246, Ser247, and Ser248. The RING-type; degenerate zinc finger occupies 260–301; it reads CLICKDIMTDAVVIPCCGNSYCDECIRTALLESDEHTCPTCH. A disordered region spans residues 329 to 353; that stretch reads YTKRLRKQLPPPPPPVPPPRPLMQR. The span at 337-349 shows a compositional bias: pro residues; sequence LPPPPPPVPPPRP. A Phosphoserine modification is found at Ser361. The tract at residues 374-408 is disordered; the sequence is VTSSSAHSAPSISSLTSNPSALAPSVSGNPSSAPA. The span at 376–390 shows a compositional bias: low complexity; it reads SSSAHSAPSISSLTS. Ser517 is subject to Phosphoserine. Disordered regions lie at residues 533–599, 622–641, 648–667, and 675–797; these read INRG…AGYS, QTAHSNTIPTTQAPPLSREE, RLKEEEKKKSKLDEFTNDFA, and KIQK…REYF. A compositionally biased stretch (pro residues) spans 558–599; sequence VPVPPPPLYPPPPHTLPLPPGVPPPQFSPQFPPGQPPPAGYS. Over residues 622–635 the composition is skewed to polar residues; the sequence is QTAHSNTIPTTQAP. Residues 686–720 are compositionally biased toward low complexity; sequence RSKSPYSGSSYSRSSYTYSKSRSGSTRSRSYSRSF. Positions 736 to 771 are enriched in basic residues; sequence RRGRGKSRNYRSRSRSHGYHRSRSRSPPYRRYHSRS. Ser769, Ser771, Ser773, Ser781, Ser816, Ser862, and Ser874 each carry phosphoserine. 2 disordered regions span residues 850 to 1292 and 1322 to 1790; these read AQPR…TKRT and WDKD…SVTV. The segment covering 903–923 has biased composition (basic and acidic residues); sequence LSTRDSHNAKDNPKSKEKESE. Over residues 932 to 941 the composition is skewed to basic residues; the sequence is NKHKKHRKRR. Composition is skewed to basic and acidic residues over residues 956–972, 980–991, 1002–1018, 1042–1072, and 1096–1161; these read ETSRKCRESSGIDETKT, SRDDATPVRDEP, VSDKDKREKDKPKVKSD, PQEKVDGDREKSPRSEPPLKKAKEEATKIDS, and SAKE…KDFE. Ser958 bears the Phosphoserine mark. The segment at 983–1139 is interaction with RB1; it reads DATPVRDEPM…KAKKPEKNKL (157 aa). At Thr985 the chain carries Phosphothreonine. Glycyl lysine isopeptide (Lys-Gly) (interchain with G-Cter in SUMO2) cross-links involve residues Lys1107 and Lys1169. A Phosphoserine modification is found at Ser1179. 2 stretches are compositionally biased toward basic and acidic residues: residues 1182 to 1200 and 1231 to 1249; these read RKMEGDVEKLERTPEKDKI and EPSEKLESTSSKIKQEKVK. Residues 1260–1277 show a composition bias toward polar residues; the sequence is EGSSSTLVDYTSTSSTGG. At Thr1272 the chain carries Phosphothreonine. Phosphoserine is present on Ser1278. Positions 1281 to 1291 are enriched in basic and acidic residues; that stretch reads RKSEEKTDTKR. Residues Ser1329, Ser1342, and Ser1348 each carry the phosphoserine modification. The segment covering 1336–1358 has biased composition (polar residues); the sequence is TTQPIQSVGKPSSIIKNVTTKPS. Composition is skewed to basic and acidic residues over residues 1363 to 1392, 1400 to 1440, 1449 to 1460, 1469 to 1507, and 1515 to 1580; these read YTEKESEQPEKLQKLPKEASHELMQHELRS, EKGR…EQGH, KETRTSEKHESV, TPGRDKKVDYDSRDYSSSKRRDERGELARRKDSPPRGKE, and KLRE…RNGK. The segment at 1434–1544 is interaction with p53; the sequence is RLSEQGHFKT…SPPRDKKPHD (111 aa). Thr1469 is subject to Phosphothreonine. Over residues 1618 to 1627 the composition is skewed to polar residues; that stretch reads LSHSSRLSSD. The span at 1634–1646 shows a compositional bias: acidic residues; it reads EAAFEPDYNESDS. Ser1646, Ser1648, and Ser1651 each carry phosphoserine. Positions 1663 to 1675 are enriched in basic and acidic residues; it reads KDLKEKTTEKAKE. Over residues 1689-1724 the composition is skewed to low complexity; sequence RSQSQSSPSVSPSRSHSPSGSQTRSHSSSASSAGSQ. A compositionally biased stretch (basic residues) spans 1727 to 1750; that stretch reads KKKKKKKEKKKHKKHKKHKKHKKH. Basic and acidic residues predominate over residues 1751-1760; that stretch reads AGADGDVEKS. Residues 1761–1773 are compositionally biased toward basic residues; sequence QKHKHKKKKAKKN. Basic and acidic residues predominate over residues 1774–1790; the sequence is KDKEKEKDDQKVRSVTV.

Interacts with MDM2 and YBX1. Also interacts with p53/TP53 and RB1. Interacts with NEK6. Interacts with ZBTB38. Phosphorylated by NEK6. As to expression, highly expressed in testis. Expressed at lower levels in brain, heart, kidney, liver, lung, skeletal muscle, spleen, thymus and tongue.

It is found in the nucleus. The protein localises to the nucleolus. It localises to the chromosome. Its subcellular location is the cytoplasm. The protein resides in the cytoskeleton. It is found in the microtubule organizing center. The protein localises to the centrosome. The enzyme catalyses S-ubiquitinyl-[E2 ubiquitin-conjugating enzyme]-L-cysteine + [acceptor protein]-L-lysine = [E2 ubiquitin-conjugating enzyme]-L-cysteine + N(6)-ubiquitinyl-[acceptor protein]-L-lysine.. It functions in the pathway protein modification; protein ubiquitination. In terms of biological role, E3 ubiquitin-protein ligase which promotes ubiquitination of YBX1, leading to its degradation by the proteasome. May play a role as a scaffold protein to promote the assembly of the p53/TP53-MDM2 complex, resulting in increase of MDM2-mediated ubiquitination and degradation of p53/TP53; may function as negative regulator of p53/TP53, leading to both apoptosis and cell growth retardation. Regulates DNA-replication and common fragile sites (CFS) stability in a ZBTB38- and MCM10-dependent manner. Controls ZBTB38 protein stability and abundance via ubiquitination and proteasomal degradation, and ZBTB38 in turn negatively regulates the expression of MCM10 which plays an important role in DNA-replication. The protein is E3 ubiquitin-protein ligase RBBP6 (Rbbp6) of Mus musculus (Mouse).